The sequence spans 331 residues: Ketol-acid reductoisomerase (NADP(+)) (331 aa).

The 181-residue stretch at 2-182 folds into the KARI N-terminal Rossmann domain; sequence ARMYYDADAQ…GGTRAGILET (181 aa). Residues 25–28, serine 51, serine 53, and 83–86 each bind NADP(+); these read YGSQ and DEVQ. Histidine 108 is a catalytic residue. Glycine 134 contributes to the NADP(+) binding site. Residues 183–328 enclose the KARI C-terminal knotted domain; it reads TFREETETDL…QELRSMFSWL (146 aa). Residues aspartate 191, glutamate 195, glutamate 227, and glutamate 231 each coordinate Mg(2+). Serine 252 contacts substrate.

Belongs to the ketol-acid reductoisomerase family. Mg(2+) serves as cofactor.

The enzyme catalyses (2R)-2,3-dihydroxy-3-methylbutanoate + NADP(+) = (2S)-2-acetolactate + NADPH + H(+). It catalyses the reaction (2R,3R)-2,3-dihydroxy-3-methylpentanoate + NADP(+) = (S)-2-ethyl-2-hydroxy-3-oxobutanoate + NADPH + H(+). The protein operates within amino-acid biosynthesis; L-isoleucine biosynthesis; L-isoleucine from 2-oxobutanoate: step 2/4. Its pathway is amino-acid biosynthesis; L-valine biosynthesis; L-valine from pyruvate: step 2/4. Its function is as follows. Involved in the biosynthesis of branched-chain amino acids (BCAA). Catalyzes an alkyl-migration followed by a ketol-acid reduction of (S)-2-acetolactate (S2AL) to yield (R)-2,3-dihydroxy-isovalerate. In the isomerase reaction, S2AL is rearranged via a Mg-dependent methyl migration to produce 3-hydroxy-3-methyl-2-ketobutyrate (HMKB). In the reductase reaction, this 2-ketoacid undergoes a metal-dependent reduction by NADPH to yield (R)-2,3-dihydroxy-isovalerate. The chain is Ketol-acid reductoisomerase (NADP(+)) from Thermosynechococcus vestitus (strain NIES-2133 / IAM M-273 / BP-1).